An 84-amino-acid polypeptide reads, in one-letter code: Large ribosomal subunit protein bL27 (84 aa).

Residues 1–21 (MAHKKGGGSSKNGRDSQSKRL) form a disordered region.

Belongs to the bacterial ribosomal protein bL27 family.

The protein is Large ribosomal subunit protein bL27 of Brachyspira hyodysenteriae (strain ATCC 49526 / WA1).